Consider the following 366-residue polypeptide: MKNRILLINLGGPRDTSEIEKFLIDLFEDPLVFDLPLPEWIRKPLGKWVAKKRAPKVAQTYKSMGFGGGSPLVSETSKQANAIAKALEKITGEKWEGNITMTCGYPDIRKLNRDFLVPTKQNILLPLYPHFSRSTVLSTAKLVEQTTKFCPVSYEGWVAPFHSSQVYLESIRDLILDFFQNRLNRKDFLHSDSFQGVSNWETIDLIFSAHGIPIRLIEKGDRYREEINSNVENLKRLLYEKGFQGKCHTSFQSRVGPSKWTEPNTITMLEQLGKNGVKRVAVYPISFVSDHLETLEEIGEQLKKIAYNNGIAEYHRIPAPGIYPKFIEAMAKIGLESIQSSKNECICKKLGGHFPNLKSGECPINF.

Positions 210 and 293 each coordinate Fe cation.

It belongs to the ferrochelatase family.

The protein resides in the cytoplasm. It catalyses the reaction heme b + 2 H(+) = protoporphyrin IX + Fe(2+). It participates in porphyrin-containing compound metabolism; protoheme biosynthesis; protoheme from protoporphyrin-IX: step 1/1. Catalyzes the ferrous insertion into protoporphyrin IX. The protein is Ferrochelatase of Leptospira borgpetersenii serovar Hardjo-bovis (strain JB197).